The primary structure comprises 165 residues: Large ribosomal subunit protein uL10 (165 aa).

This sequence belongs to the universal ribosomal protein uL10 family. In terms of assembly, part of the ribosomal stalk of the 50S ribosomal subunit. The N-terminus interacts with L11 and the large rRNA to form the base of the stalk. The C-terminus forms an elongated spine to which L12 dimers bind in a sequential fashion forming a multimeric L10(L12)X complex.

In terms of biological role, forms part of the ribosomal stalk, playing a central role in the interaction of the ribosome with GTP-bound translation factors. This chain is Large ribosomal subunit protein uL10, found in Shewanella pealeana (strain ATCC 700345 / ANG-SQ1).